A 180-amino-acid chain; its full sequence is NADH-quinone oxidoreductase subunit I (180 aa).

4Fe-4S ferredoxin-type domains lie at 48-80 (IVLT…LQKA) and 90-119 (EFFR…LTPD). Cys60, Cys63, Cys66, Cys70, Cys99, Cys102, Cys105, and Cys109 together coordinate [4Fe-4S] cluster.

It belongs to the complex I 23 kDa subunit family. As to quaternary structure, NDH-1 is composed of 13 different subunits. Subunits NuoA, H, J, K, L, M, N constitute the membrane sector of the complex. [4Fe-4S] cluster serves as cofactor.

It is found in the cell inner membrane. The catalysed reaction is a quinone + NADH + 5 H(+)(in) = a quinol + NAD(+) + 4 H(+)(out). Its function is as follows. NDH-1 shuttles electrons from NADH, via FMN and iron-sulfur (Fe-S) centers, to quinones in the respiratory chain. The immediate electron acceptor for the enzyme in this species is believed to be ubiquinone. Couples the redox reaction to proton translocation (for every two electrons transferred, four hydrogen ions are translocated across the cytoplasmic membrane), and thus conserves the redox energy in a proton gradient. The chain is NADH-quinone oxidoreductase subunit I from Edwardsiella ictaluri (strain 93-146).